The following is a 1384-amino-acid chain: DNA-directed RNA polymerase subunit beta (1384 aa).

It belongs to the RNA polymerase beta chain family. As to quaternary structure, the RNAP catalytic core consists of 2 alpha, 1 beta, 1 beta' and 1 omega subunit. When a sigma factor is associated with the core the holoenzyme is formed, which can initiate transcription.

The catalysed reaction is RNA(n) + a ribonucleoside 5'-triphosphate = RNA(n+1) + diphosphate. DNA-dependent RNA polymerase catalyzes the transcription of DNA into RNA using the four ribonucleoside triphosphates as substrates. In Stenotrophomonas maltophilia (strain R551-3), this protein is DNA-directed RNA polymerase subunit beta.